Here is a 337-residue protein sequence, read N- to C-terminus: UDP-3-O-acylglucosamine N-acyltransferase (337 aa).

H238 (proton acceptor) is an active-site residue.

The protein belongs to the transferase hexapeptide repeat family. LpxD subfamily. Homotrimer.

It catalyses the reaction a UDP-3-O-[(3R)-3-hydroxyacyl]-alpha-D-glucosamine + a (3R)-hydroxyacyl-[ACP] = a UDP-2-N,3-O-bis[(3R)-3-hydroxyacyl]-alpha-D-glucosamine + holo-[ACP] + H(+). The protein operates within bacterial outer membrane biogenesis; LPS lipid A biosynthesis. Catalyzes the N-acylation of UDP-3-O-acylglucosamine using 3-hydroxyacyl-ACP as the acyl donor. Is involved in the biosynthesis of lipid A, a phosphorylated glycolipid that anchors the lipopolysaccharide to the outer membrane of the cell. The protein is UDP-3-O-acylglucosamine N-acyltransferase of Xanthomonas campestris pv. campestris (strain 8004).